Reading from the N-terminus, the 500-residue chain is Cytosol aminopeptidase (500 aa).

Positions 265 and 270 each coordinate Mn(2+). Lys-277 is an active-site residue. Mn(2+)-binding residues include Asp-288, Asp-347, and Glu-349. Arg-351 is an active-site residue.

Belongs to the peptidase M17 family. The cofactor is Mn(2+).

The protein resides in the cytoplasm. It carries out the reaction Release of an N-terminal amino acid, Xaa-|-Yaa-, in which Xaa is preferably Leu, but may be other amino acids including Pro although not Arg or Lys, and Yaa may be Pro. Amino acid amides and methyl esters are also readily hydrolyzed, but rates on arylamides are exceedingly low.. The catalysed reaction is Release of an N-terminal amino acid, preferentially leucine, but not glutamic or aspartic acids.. In terms of biological role, presumably involved in the processing and regular turnover of intracellular proteins. Catalyzes the removal of unsubstituted N-terminal amino acids from various peptides. The sequence is that of Cytosol aminopeptidase (pepA) from Rickettsia prowazekii (strain Madrid E).